The following is a 196-amino-acid chain: dCTP deaminase, dUMP-forming (196 aa).

Residues 101–106, Asp-119, 127–129, Gln-148, Tyr-162, and Gln-174 contribute to the dCTP site; these read KSSLGR and TLE. Residue Glu-129 is the Proton donor/acceptor of the active site.

It belongs to the dCTP deaminase family. Homotrimer.

The enzyme catalyses dCTP + 2 H2O = dUMP + NH4(+) + diphosphate. It functions in the pathway pyrimidine metabolism; dUMP biosynthesis; dUMP from dCTP: step 1/1. In terms of biological role, bifunctional enzyme that catalyzes both the deamination of dCTP to dUTP and the hydrolysis of dUTP to dUMP without releasing the toxic dUTP intermediate. The chain is dCTP deaminase, dUMP-forming from Thermobifida fusca (strain YX).